The following is a 455-amino-acid chain: Glutamate-1-semialdehyde 2,1-aminomutase (455 aa).

Position 286 is an N6-(pyridoxal phosphate)lysine (K286).

It belongs to the class-III pyridoxal-phosphate-dependent aminotransferase family. HemL subfamily. In terms of assembly, homodimer. Pyridoxal 5'-phosphate is required as a cofactor.

The protein resides in the cytoplasm. It carries out the reaction (S)-4-amino-5-oxopentanoate = 5-aminolevulinate. The protein operates within porphyrin-containing compound metabolism; protoporphyrin-IX biosynthesis; 5-aminolevulinate from L-glutamyl-tRNA(Glu): step 2/2. The protein is Glutamate-1-semialdehyde 2,1-aminomutase of Clavibacter sepedonicus (Clavibacter michiganensis subsp. sepedonicus).